We begin with the raw amino-acid sequence, 399 residues long: Phosphoglycerate kinase (399 aa).

Residues 22 to 24 (DFN), arginine 38, 61 to 64 (HLGR), arginine 120, and arginine 153 contribute to the substrate site. ATP-binding positions include lysine 206, glycine 297, glutamate 328, and 354–357 (GGDT).

Belongs to the phosphoglycerate kinase family. In terms of assembly, monomer.

The protein localises to the cytoplasm. The enzyme catalyses (2R)-3-phosphoglycerate + ATP = (2R)-3-phospho-glyceroyl phosphate + ADP. Its pathway is carbohydrate degradation; glycolysis; pyruvate from D-glyceraldehyde 3-phosphate: step 2/5. The polypeptide is Phosphoglycerate kinase (Campylobacter concisus (strain 13826)).